We begin with the raw amino-acid sequence, 419 residues long: Phosphatidylcholine:ceramide cholinephosphotransferase 1 (419 aa).

Residues 13 to 76 form the SAM domain; that stretch reads WSPKKVADWL…LDMIETLKME (64 aa). Serine 14 is subject to Phosphoserine. The next 5 membrane-spanning stretches (helical) occupy residues 142–162, 190–210, 221–241, 282–302, and 310–330; these read FLAF…ISVV, FSIC…QWLL, FFCI…VTTL, MCGD…YLFI, and LWWY…CILL. The active site involves histidine 291. The Cytoplasmic segment spans residues 331–419; it reads AHDHYTVDVV…VKYSRLVNDT (89 aa). Active-site residues include histidine 334 and aspartate 338.

Belongs to the sphingomyelin synthase family. Isoform 1 is widely expressed, isoform 2 shows a more narrow distribution and isoform 3 is detected only in testis and heart.

Its subcellular location is the golgi apparatus membrane. The enzyme catalyses an N-acylsphing-4-enine + a 1,2-diacyl-sn-glycero-3-phosphocholine = a sphingomyelin + a 1,2-diacyl-sn-glycerol. The catalysed reaction is 1-(9Z-octadecenoyl)-2-acyl-sn-3-glycerol + a sphingomyelin = a 1-(9Z-octadecenoyl)-2-acyl-sn-glycero-3-phosphocholine + an N-acylsphing-4-enine. It catalyses the reaction N-hexadecanoylsphinganine + a 1,2-diacyl-sn-glycero-3-phosphocholine = N-hexadecanoyl-sphinganine-1-phosphocholine + a 1,2-diacyl-sn-glycerol. It carries out the reaction N-hexadecanoyl-(4R)-hydroxysphinganine + a 1,2-diacyl-sn-glycero-3-phosphocholine = N-hexadecanoyl-(4R)-hydroxysphinganine-phosphocholine + a 1,2-diacyl-sn-glycerol. The enzyme catalyses an N-acylsphing-4-enine + a 1,2-diacyl-sn-glycero-3-phosphoethanolamine = an N-acylsphing-4-enine 1-phosphoethanolamine + a 1,2-diacyl-sn-glycerol. Its pathway is sphingolipid metabolism. Functionally, major sphingomyelin synthase at the Golgi apparatus. Catalyzes the reversible transfer of phosphocholine moiety in sphingomyelin biosynthesis: in the forward reaction transfers phosphocholine head group of phosphatidylcholine (PC) on to ceramide (CER) to form ceramide phosphocholine (sphingomyelin, SM) and diacylglycerol (DAG) as by-product, and in the reverse reaction transfers phosphocholine from SM to DAG to form PC and CER. The direction of the reaction depends on the levels of CER and DAG in Golgi membranes. Converts the newly synthesized CER, that is transported from the endoplasmic reticulum to the trans-Golgi by the Cer transport protein (CERT), to SM. Can form a heteromeric complex with glucosylceramide synthase (GCS) increasing SMS activity and reducing glucosylceramide synthesis, a critical mechanism that controls the metabolic fate of CER in the Golgi. Does not use free phosphorylcholine or CDP-choline as donor. Can also transfer phosphoethanolamine head group of phosphatidylethanolamine (PE) on to CER to form ceramide phosphoethanolamine (CPE). Regulates receptor-mediated signal transduction via mitogenic DAG and proapoptotic CER, as well as via SM, a structural component of membrane rafts that serve as platforms for signal transduction and protein sorting. Plays a role in secretory transport via regulation of DAG pool at the Golgi apparatus and its downstream effects on PRKD1. (Microbial infection) Contributes to the brain SM production for Japanese encephalitis virus attachment and infection. In Mus musculus (Mouse), this protein is Phosphatidylcholine:ceramide cholinephosphotransferase 1 (Sgms1).